Consider the following 534-residue polypeptide: CTP synthase (534 aa).

The interval M1–L268 is amidoligase domain. S14 is a binding site for CTP. S14 contributes to the UTP binding site. Residue G15–I20 participates in ATP binding. Y55 provides a ligand contact to L-glutamine. D72 provides a ligand contact to ATP. Mg(2+) contacts are provided by D72 and E142. CTP contacts are provided by residues D149–E151, K189–Q194, and K225. UTP is bound by residues K189 to Q194 and K225. In terms of domain architecture, Glutamine amidotransferase type-1 spans T293–K534. G355 lines the L-glutamine pocket. The active-site Nucleophile; for glutamine hydrolysis is C382. L-glutamine is bound by residues L383–Q386, E406, and R462. Catalysis depends on residues H507 and E509.

The protein belongs to the CTP synthase family. As to quaternary structure, homotetramer.

It catalyses the reaction UTP + L-glutamine + ATP + H2O = CTP + L-glutamate + ADP + phosphate + 2 H(+). The enzyme catalyses L-glutamine + H2O = L-glutamate + NH4(+). The catalysed reaction is UTP + NH4(+) + ATP = CTP + ADP + phosphate + 2 H(+). It participates in pyrimidine metabolism; CTP biosynthesis via de novo pathway; CTP from UDP: step 2/2. Allosterically activated by GTP, when glutamine is the substrate; GTP has no effect on the reaction when ammonia is the substrate. The allosteric effector GTP functions by stabilizing the protein conformation that binds the tetrahedral intermediate(s) formed during glutamine hydrolysis. Inhibited by the product CTP, via allosteric rather than competitive inhibition. Its function is as follows. Catalyzes the ATP-dependent amination of UTP to CTP with either L-glutamine or ammonia as the source of nitrogen. Regulates intracellular CTP levels through interactions with the four ribonucleotide triphosphates. The polypeptide is CTP synthase (Ruminiclostridium cellulolyticum (strain ATCC 35319 / DSM 5812 / JCM 6584 / H10) (Clostridium cellulolyticum)).